The sequence spans 479 residues: Sulfate adenylyltransferase subunit 1 (479 aa).

The 215-residue stretch at 25-239 folds into the tr-type G domain; it reads KSLLRFLTCG…EVLETVDIQR (215 aa). Positions 34–41 are G1; it reads GSVDDGKS. Residue 34–41 participates in GTP binding; that stretch reads GSVDDGKS. A G2 region spans residues 92–96; the sequence is GITID. Residues 113–116 form a G3 region; the sequence is DTPG. Residues 113–117 and 168–171 contribute to the GTP site; these read DTPGH and NKMD. Positions 168–171 are G4; the sequence is NKMD. The interval 206 to 208 is G5; it reads SAL.

This sequence belongs to the TRAFAC class translation factor GTPase superfamily. Classic translation factor GTPase family. CysN/NodQ subfamily. In terms of assembly, heterodimer composed of CysD, the smaller subunit, and CysN.

The catalysed reaction is sulfate + ATP + H(+) = adenosine 5'-phosphosulfate + diphosphate. Its pathway is sulfur metabolism; hydrogen sulfide biosynthesis; sulfite from sulfate: step 1/3. In terms of biological role, with CysD forms the ATP sulfurylase (ATPS) that catalyzes the adenylation of sulfate producing adenosine 5'-phosphosulfate (APS) and diphosphate, the first enzymatic step in sulfur assimilation pathway. APS synthesis involves the formation of a high-energy phosphoric-sulfuric acid anhydride bond driven by GTP hydrolysis by CysN coupled to ATP hydrolysis by CysD. The chain is Sulfate adenylyltransferase subunit 1 from Salmonella dublin (strain CT_02021853).